Consider the following 1405-residue polypeptide: Rho guanine nucleotide exchange factor 18 (1405 aa).

Disordered regions lie at residues 1-47 (MGSE…EDGF), 92-115 (ETHRQEARRESSHTSCEGASALPQ), and 289-330 (PGKS…PGKR). 2 stretches are compositionally biased toward basic and acidic residues: residues 92–103 (ETHRQEARRESS) and 308–330 (RQKEKGKSPAHLKDKTQDLPGKR). Residues 347-372 (SSCPLCGEPLLNSASLKEHPRTTLLS) form a C2H2-type; degenerate zinc finger. The DH domain maps to 485-682 (KRQDVLYELM…KDIISQVDAK (198 aa)). The region spanning 723 to 825 (QLHLEGALCW…WMAHIRRAVE (103 aa)) is the PH domain. The disordered stretch occupies residues 936 to 1016 (QVEEGSVSAG…PQAVEMPSTE (81 aa)). Thr-952 is modified (phosphothreonine). The residue at position 961 (Ser-961) is a Phosphoserine. A coiled-coil region spans residues 1084 to 1181 (FEKQREERAG…RERLELLRRF (98 aa)). Disordered stretches follow at residues 1198–1242 (EAQP…VERP), 1274–1309 (RQTAVQQQIPTKLAASTKGGKEKGSKSRGSQRWESS), and 1328–1405 (ESAS…VIFF). Residues Ser-1336 and Ser-1338 each carry the phosphoserine modification. Residues 1355–1365 (FPAPSPAPAAT) are compositionally biased toward pro residues. The span at 1375–1394 (TSLPPVSPASSLPTTPLATT) shows a compositional bias: low complexity. A compositionally biased stretch (basic and acidic residues) spans 1396 to 1405 (EVSKEDVIFF).

Interacts with SEPT9; interaction may inhibit GEF activity. Interacts with Gbetagamma subunits GNB1 and GNG2. Interacts with EPB41L4B. Interacts with PATJ (via C-terminus).

The protein localises to the cytoplasm. It localises to the cytoskeleton. The protein resides in the cell membrane. Its subcellular location is the apical cell membrane. Functionally, acts as a guanine nucleotide exchange factor (GEF) for RhoA GTPases. May play a role in actin cytoskeleton reorganization in different tissues since its activation induces formation of actin stress fibers. Also acts as a GEF for RAC1, inducing production of reactive oxygen species (ROS). Does not act as a GEF for CDC42. The G protein beta-gamma (Gbetagamma) subunits of heterotrimeric G proteins act as activators, explaining the integrated effects of LPA and other G-protein coupled receptor agonists on actin stress fiber formation, cell shape change and ROS production. Required for EPB41L4B-mediated regulation of the circumferential actomyosin belt in epithelial cells. The chain is Rho guanine nucleotide exchange factor 18 (Arhgef18) from Mus musculus (Mouse).